The sequence spans 361 residues: MTTAVRLLPSLGRTAHKRSLYLFSAAAAAAAAATFAYSQSQKRSSSSPGGGSNHGWNNWGKAAALASTTPLVHVASVEKGRSYEDFQKVYNAIALKLREDDEYDNYIGYGPVLVRLAWHTSGTWDKHDNTGGSYGGTYRFKKEFNDPSNAGLQNGFKFLEPIHKEFPWISSGDLFSLGGVTAVQEMQGPKIPWRCGRVDTPEDTTPDNGRLPDADKDADYVRTFFQRLNMNDREVVALMGAHALGKTHLKNSGYEGPWGAANNVFTNEFYLNLLNEDWKLEKNDANNEQWDSKSGYMMLPTDYSLIQDPKYLSIVKEYANDQDKFFKDFSKAFEKLLENGITFPKDAPSPFIFKTLEEQGL.

The transit peptide at 1-67 (MTTAVRLLPS…NWGKAAALAS (67 aa)) directs the protein to the mitochondrion. The Proton acceptor role is filled by His-119. Position 220 is a phosphotyrosine (Tyr-220). His-242 serves as a coordination point for heme b. The active-site Tryptophan radical intermediate is the Trp-258.

The protein belongs to the peroxidase family. Cytochrome c peroxidase subfamily. Forms a one-to-one complex with cytochrome c. Heme b is required as a cofactor. Post-translationally, CCP1 precursor is processed by the rhomboid protease PCP1, which cleaves the N-terminal hydrophobic transit peptide. The m-AAA protease (composed of YTA12/RCA1 and YTA10/AFG3) is required for CCP1 maturation: m-AAA protease promotes membrane dislocation of the CCP1 transmembrane segment within the transit peptide to ensure the correct positioning of CCP1 within the membrane bilayer, allowing intramembrane cleavage by PCP1.

Its subcellular location is the mitochondrion matrix. It localises to the mitochondrion intermembrane space. The enzyme catalyses 2 Fe(II)-[cytochrome c] + H2O2 + 2 H(+) = 2 Fe(III)-[cytochrome c] + 2 H2O. Functionally, destroys radicals which are normally produced within the cells and which are toxic to biological systems. This is Cytochrome c peroxidase, mitochondrial (CCP1) from Saccharomyces cerevisiae (strain ATCC 204508 / S288c) (Baker's yeast).